Here is a 406-residue protein sequence, read N- to C-terminus: Multifunctional CCA protein (406 aa).

The ATP site is built by Gly8 and Arg11. Gly8 and Arg11 together coordinate CTP. Mg(2+)-binding residues include Asp21 and Asp23. Residues Arg91, Arg137, and Arg140 each coordinate ATP. Residues Arg91, Arg137, and Arg140 each coordinate CTP. An HD domain is found at 228–329; it reads TGIHTLMVAQ…IKILNKFDVW (102 aa).

Belongs to the tRNA nucleotidyltransferase/poly(A) polymerase family. Bacterial CCA-adding enzyme type 1 subfamily. In terms of assembly, monomer. Can also form homodimers and oligomers. The cofactor is Mg(2+). Requires Ni(2+) as cofactor.

The catalysed reaction is a tRNA precursor + 2 CTP + ATP = a tRNA with a 3' CCA end + 3 diphosphate. It carries out the reaction a tRNA with a 3' CCA end + 2 CTP + ATP = a tRNA with a 3' CCACCA end + 3 diphosphate. In terms of biological role, catalyzes the addition and repair of the essential 3'-terminal CCA sequence in tRNAs without using a nucleic acid template. Adds these three nucleotides in the order of C, C, and A to the tRNA nucleotide-73, using CTP and ATP as substrates and producing inorganic pyrophosphate. tRNA 3'-terminal CCA addition is required both for tRNA processing and repair. Also involved in tRNA surveillance by mediating tandem CCA addition to generate a CCACCA at the 3' terminus of unstable tRNAs. While stable tRNAs receive only 3'-terminal CCA, unstable tRNAs are marked with CCACCA and rapidly degraded. This is Multifunctional CCA protein from Vibrio campbellii (strain ATCC BAA-1116).